A 177-amino-acid polypeptide reads, in one-letter code: Thaumatin-like protein (177 aa).

The first 26 residues, 1 to 26 (MASPATSSAVLVVVLVATLAAGGANA), serve as a signal peptide directing secretion.

The protein belongs to the thaumatin family.

The protein localises to the secreted. The chain is Thaumatin-like protein from Oryza sativa subsp. japonica (Rice).